The primary structure comprises 687 residues: DNA-directed RNA polymerase subunit beta' (687 aa).

Zn(2+)-binding residues include Cys76, Cys78, Cys94, and Cys97. Residues Asp496, Asp498, and Asp500 each contribute to the Mg(2+) site.

It belongs to the RNA polymerase beta' chain family. RpoC1 subfamily. In terms of assembly, in plastids the minimal PEP RNA polymerase catalytic core is composed of four subunits: alpha, beta, beta', and beta''. When a (nuclear-encoded) sigma factor is associated with the core the holoenzyme is formed, which can initiate transcription. It depends on Mg(2+) as a cofactor. Zn(2+) is required as a cofactor.

It is found in the plastid. Its subcellular location is the chloroplast. It catalyses the reaction RNA(n) + a ribonucleoside 5'-triphosphate = RNA(n+1) + diphosphate. Functionally, DNA-dependent RNA polymerase catalyzes the transcription of DNA into RNA using the four ribonucleoside triphosphates as substrates. The chain is DNA-directed RNA polymerase subunit beta' from Ipomoea purpurea (Common morning glory).